Reading from the N-terminus, the 184-residue chain is Photosystem I assembly protein Ycf4 (184 aa).

The next 2 membrane-spanning stretches (helical) occupy residues 21-43 (NFCWACILFLGSLGFLLVGTSSY) and 58-80 (IFFPQGIVMSFYGIAGLFISSYL).

The protein belongs to the Ycf4 family.

Its subcellular location is the plastid. It localises to the chloroplast thylakoid membrane. Seems to be required for the assembly of the photosystem I complex. In Calycanthus floridus var. glaucus (Eastern sweetshrub), this protein is Photosystem I assembly protein Ycf4.